Consider the following 521-residue polypeptide: Glutamate--cysteine ligase (521 aa).

It belongs to the glutamate--cysteine ligase type 1 family. Type 1 subfamily.

It carries out the reaction L-cysteine + L-glutamate + ATP = gamma-L-glutamyl-L-cysteine + ADP + phosphate + H(+). Its pathway is sulfur metabolism; glutathione biosynthesis; glutathione from L-cysteine and L-glutamate: step 1/2. The sequence is that of Glutamate--cysteine ligase from Aliivibrio salmonicida (strain LFI1238) (Vibrio salmonicida (strain LFI1238)).